Consider the following 194-residue polypeptide: dCTP deaminase, dUMP-forming (194 aa).

DCTP is bound by residues 105-110 (RSSMGR), Asp123, 131-133 (TLE), Gln152, Tyr166, Lys174, and Gln178. The Proton donor/acceptor role is filled by Glu133.

This sequence belongs to the dCTP deaminase family. As to quaternary structure, homotrimer.

It catalyses the reaction dCTP + 2 H2O = dUMP + NH4(+) + diphosphate. It participates in pyrimidine metabolism; dUMP biosynthesis; dUMP from dCTP: step 1/1. In terms of biological role, bifunctional enzyme that catalyzes both the deamination of dCTP to dUTP and the hydrolysis of dUTP to dUMP without releasing the toxic dUTP intermediate. The chain is dCTP deaminase, dUMP-forming from Methanobrevibacter smithii (strain ATCC 35061 / DSM 861 / OCM 144 / PS).